We begin with the raw amino-acid sequence, 245 residues long: 8-amino-3,8-dideoxy-manno-octulosonate cytidylyltransferase (245 aa).

The protein belongs to the KdsB family.

Its subcellular location is the cytoplasm. It catalyses the reaction 8-amino-3,8-dideoxy-alpha-D-manno-octulosonate + CTP = CMP-8-amino-3,8-dideoxy-alpha-D-manno-oct-2-ulosonate + diphosphate. It participates in bacterial outer membrane biogenesis; lipopolysaccharide biosynthesis. Functionally, activates KDO8N (a required 8-carbon sugar) for incorporation into bacterial lipopolysaccharide in the Shewanella genus. The sequence is that of 8-amino-3,8-dideoxy-manno-octulosonate cytidylyltransferase from Shewanella oneidensis (strain ATCC 700550 / JCM 31522 / CIP 106686 / LMG 19005 / NCIMB 14063 / MR-1).